Here is a 1088-residue protein sequence, read N- to C-terminus: RNA-directed RNA polymerase (1088 aa).

The RdRp catalytic domain occupies 501–687 (LSYGDVTRFL…AKRYIAGGKI (187 aa)).

The protein belongs to the reoviridae RNA-directed RNA polymerase family. In terms of assembly, interacts with VP3 (Potential). Interacts with VP2; this interaction activates VP1. Interacts with NSP5; this interaction is probably necessary for the formation of functional virus factories. Interacts with NSP2; this interaction is weak. Mg(2+) serves as cofactor.

The protein localises to the virion. The catalysed reaction is RNA(n) + a ribonucleoside 5'-triphosphate = RNA(n+1) + diphosphate. In terms of biological role, RNA-directed RNA polymerase that is involved in both transcription and genome replication. Together with VP3 capping enzyme, forms an enzyme complex positioned near the channels situated at each of the five-fold vertices of the core. Following infection, the outermost layer of the virus is lost, leaving a double-layered particle (DLP) made up of the core and VP6 shell. VP1 then catalyzes the transcription of fully conservative plus-strand genomic RNAs that are extruded through the DLP's channels into the cytoplasm where they function as mRNAs for translation of viral proteins. One copy of each of the viral (+)RNAs is also recruited during core assembly, together with newly synthesized polymerase complexes and VP2. The polymerase of these novo-formed particles catalyzes the synthesis of complementary minus-strands leading to dsRNA formation. To do so, the polymerase specifically recognizes and binds 4 bases 5'-UGUG-3' in the conserved 3'-sequence of plus-strand RNA templates. VP2 presumably activates the autoinhibited VP1-RNA complex to coordinate packaging and genome replication. Once dsRNA synthesis is complete, the polymerase switches to the transcriptional mode, thus providing secondary transcription. This chain is RNA-directed RNA polymerase, found in Rotavirus A (strain RVA/Human/Philippines/L26/1987/G12P1B[4]) (RV-A).